Consider the following 166-residue polypeptide: Disulfide bond formation protein B (166 aa).

The Cytoplasmic segment spans residues 1–10 (MGLNITNRQG). A helical membrane pass occupies residues 11–27 (FLLVAAACAGAIGFALF). The Periplasmic portion of the chain corresponds to 28-45 (AQYQLGEEPCPLCILQRI). Cysteines 37 and 40 form a disulfide. The chain crosses the membrane as a helical span at residues 46–62 (GVMAVGALALLAALHNP). The Cytoplasmic portion of the chain corresponds to 63 to 69 (GKTGAKV). The chain crosses the membrane as a helical span at residues 70 to 86 (WGGLMTLAALSGAGVSL). The Periplasmic segment spans residues 87-143 (RQLWLQSLPADQVPQCGPGLEFLMESFPLWEVLSKVLKGSGECAAIQGRFLGMTMPF). Cys-102 and Cys-129 are disulfide-bonded. A helical membrane pass occupies residues 144–162 (WVAVFFAGVIVWTLWLVGR). At 163 to 166 (RRRG) the chain is on the cytoplasmic side.

Belongs to the DsbB family.

The protein localises to the cell inner membrane. Its function is as follows. Required for disulfide bond formation in some periplasmic proteins. Acts by oxidizing the DsbA protein. This chain is Disulfide bond formation protein B, found in Chromobacterium violaceum (strain ATCC 12472 / DSM 30191 / JCM 1249 / CCUG 213 / NBRC 12614 / NCIMB 9131 / NCTC 9757 / MK).